The following is a 343-amino-acid chain: Beta-ketoacyl-[acyl-carrier-protein] synthase III 1 (343 aa).

Residues C122 and H268 contribute to the active site. The interval 269–273 (QANVR) is ACP-binding. The active site involves N299.

It belongs to the thiolase-like superfamily. FabH family. In terms of assembly, homodimer.

Its subcellular location is the cytoplasm. The catalysed reaction is malonyl-[ACP] + acetyl-CoA + H(+) = 3-oxobutanoyl-[ACP] + CO2 + CoA. Its pathway is lipid metabolism; fatty acid biosynthesis. In terms of biological role, essential enzyme that catalyzes the condensation reaction of fatty acid synthesis by the addition to an acyl acceptor of two carbons from malonyl-ACP. Catalyzes the first condensation reaction which initiates fatty acid synthesis and may therefore play a role in governing the total rate of fatty acid production. Possesses both acetoacetyl-ACP synthase and acetyl transacylase activities. Its substrate specificity determines the biosynthesis of branched-chain of fatty acids. This is Beta-ketoacyl-[acyl-carrier-protein] synthase III 1 from Streptomyces coelicolor (strain ATCC BAA-471 / A3(2) / M145).